Reading from the N-terminus, the 343-residue chain is Heat-inducible transcription repressor HrcA (343 aa).

Belongs to the HrcA family.

Functionally, negative regulator of class I heat shock genes (grpE-dnaK-dnaJ and groELS operons). Prevents heat-shock induction of these operons. This Mycobacterium ulcerans (strain Agy99) protein is Heat-inducible transcription repressor HrcA.